A 337-amino-acid chain; its full sequence is tRNA N6-adenosine threonylcarbamoyltransferase (337 aa).

Residues His-111 and His-115 each coordinate Fe cation. Substrate is bound by residues 134-138 (LVSGG), Asp-167, Gly-180, and Asn-272. Asp-300 provides a ligand contact to Fe cation.

It belongs to the KAE1 / TsaD family. The cofactor is Fe(2+).

The protein resides in the cytoplasm. It catalyses the reaction L-threonylcarbamoyladenylate + adenosine(37) in tRNA = N(6)-L-threonylcarbamoyladenosine(37) in tRNA + AMP + H(+). Required for the formation of a threonylcarbamoyl group on adenosine at position 37 (t(6)A37) in tRNAs that read codons beginning with adenine. Is involved in the transfer of the threonylcarbamoyl moiety of threonylcarbamoyl-AMP (TC-AMP) to the N6 group of A37, together with TsaE and TsaB. TsaD likely plays a direct catalytic role in this reaction. This is tRNA N6-adenosine threonylcarbamoyltransferase from Yersinia enterocolitica serotype O:8 / biotype 1B (strain NCTC 13174 / 8081).